Reading from the N-terminus, the 475-residue chain is Putative histidine permease (475 aa).

The next 12 membrane-spanning stretches (helical) occupy residues 20–40, 44–64, 87–107, 127–147, 162–182, 199–219, 246–266, 277–297, 341–361, 363–383, 410–430, and 434–454; these read LFMISLGGVIGTGLFLSTGYT, AGPGGTILAYVIGGLMMYLVM, FIGPSTGFMVGIMYWINWVVT, SVWMWSAIFAALLFICNAFSV, IVTIILFIILGGAAMFGLISL, GLFPNGFLAVFIAMISVSFAF, VAWRTVIFFIGAVFILSGLIS, FVAVFAEIGIPYAADIMNFVI, ALMISMAVSCLSLVSSIVAPG, VYVVMVAIAGFAGVVVWMSIA, YPLMPIAALLLCSASCIGLAF, and QRIALFCGVPCIILCYLIYHF.

The protein belongs to the amino acid-polyamine-organocation (APC) superfamily.

Its subcellular location is the cell membrane. This chain is Putative histidine permease (hutM), found in Bacillus subtilis (strain 168).